A 199-amino-acid polypeptide reads, in one-letter code: Interferon kappa (199 aa).

An N-terminal signal peptide occupies residues 1-21 (MTPKFLWLVALVALYIPPIQS). Intrachain disulfides connect C24/C119 and C49/C162.

This sequence belongs to the alpha/beta interferon family. Expressed at low levels in peritoneal macrophages.

It is found in the secreted. Functionally, may play a role in the regulation of immune cell function. In Mus musculus (Mouse), this protein is Interferon kappa (Ifnk).